A 282-amino-acid polypeptide reads, in one-letter code: 2-dehydro-3-deoxyphosphooctonate aldolase (282 aa).

The protein belongs to the KdsA family.

Its subcellular location is the cytoplasm. The catalysed reaction is D-arabinose 5-phosphate + phosphoenolpyruvate + H2O = 3-deoxy-alpha-D-manno-2-octulosonate-8-phosphate + phosphate. It functions in the pathway carbohydrate biosynthesis; 3-deoxy-D-manno-octulosonate biosynthesis; 3-deoxy-D-manno-octulosonate from D-ribulose 5-phosphate: step 2/3. Its pathway is bacterial outer membrane biogenesis; lipopolysaccharide biosynthesis. This is 2-dehydro-3-deoxyphosphooctonate aldolase from Agrobacterium fabrum (strain C58 / ATCC 33970) (Agrobacterium tumefaciens (strain C58)).